The following is a 435-amino-acid chain: Serine carboxypeptidase-like 12 (435 aa).

A signal peptide spans 1 to 21 (MKSTPKLLLLLLFIINHHVDS). Intrachain disulfides connect Cys80–Cys323, Cys244–Cys258, and Cys282–Cys289. Asn101 carries an N-linked (GlcNAc...) asparagine glycan. Residue Ser176 is part of the active site. 3 N-linked (GlcNAc...) asparagine glycosylation sites follow: Asn313, Asn336, and Asn344. Asp360 is an active-site residue. An N-linked (GlcNAc...) asparagine glycan is attached at Asn376. The active site involves His413. A glycan (N-linked (GlcNAc...) asparagine) is linked at Asn420.

The protein belongs to the peptidase S10 family. As to expression, expressed in roots.

The protein resides in the secreted. Probable carboxypeptidase. The chain is Serine carboxypeptidase-like 12 (SCPL12) from Arabidopsis thaliana (Mouse-ear cress).